We begin with the raw amino-acid sequence, 487 residues long: Meiotic recombination protein SPO11-4 (487 aa).

A disordered region spans residues 1–56 (MDDSTDDDSYHPRKHYAYDRQVSSSRWRTSREYIRGPGPETHTTESAQDGQDPPAG). The region spanning 119–252 (KSRVEARKTL…LGIIAAEKGI (134 aa)) is the Topo IIA-type catalytic domain. Tyr213 functions as the O-(5'-phospho-DNA)-tyrosine intermediate in the catalytic mechanism. Glu301 and Asp353 together coordinate Mg(2+).

It belongs to the TOP6A family. Homodimer. Interacts with TOP6B. Mg(2+) serves as cofactor.

It localises to the nucleus. It carries out the reaction ATP-dependent breakage, passage and rejoining of double-stranded DNA.. Its function is as follows. Required for meiotic recombination. Mediates DNA cleavage that forms the double-strand breaks (DSB) that initiate meiotic recombination. Possesses double-stranded DNA cleavage activity in vitro. The sequence is that of Meiotic recombination protein SPO11-4 (SPO11-4) from Oryza sativa subsp. japonica (Rice).